A 125-amino-acid chain; its full sequence is Putative oxygen-evolving enhancer protein 2-2 (125 aa).

S15 is modified (phosphoserine).

This sequence belongs to the PsbP family.

The protein is Putative oxygen-evolving enhancer protein 2-2 (PSBP2) of Arabidopsis thaliana (Mouse-ear cress).